Here is a 522-residue protein sequence, read N- to C-terminus: F-box only protein 7 (522 aa).

The ubiquitin-like stretch occupies residues 1-88; it reads MRLRVRLLKR…QDDIPAPNIP (88 aa). Positions 85–144 are disordered; the sequence is PNIPSSTDSEHSSLQNNEQPSLATSSNQTSMQDEQPSDSFQGQAAQSGVWNDDSMLGPSQ. Over residues 87-133 the composition is skewed to polar residues; the sequence is IPSSTDSEHSSLQNNEQPSLATSSNQTSMQDEQPSDSFQGQAAQSGV. The segment at 92–129 is important for interaction with PINK1; that stretch reads DSEHSSLQNNEQPSLATSSNQTSMQDEQPSDSFQGQAA. The segment at 129 to 169 is important for interaction with CDK6; sequence AQSGVWNDDSMLGPSQNFEAESIQDNAHMAEGTGFYPSEPM. Residues 180–324 are important for dimerization and interaction with PSMF1; sequence PHSLETLYQS…PLLAFTRQAL (145 aa). One can recognise an F-box domain in the interval 329–375; sequence VFGLVVLPLELKLRIFRLLDVRSVLSLSAVCRDLFTASNDPLLWRFL. Positions 381–522 are important for interaction with CDK6; it reads RDNTVRVQDT…RPTDGRLSFM (142 aa). Residues Arg-432 and Arg-451 each carry the omega-N-methylarginine modification. The RFDP motif motif lies at 481–484; sequence RFDP. The interval 483-522 is disordered; sequence DPVGPLPGPNPILPGRGGPNDRFPFRPSRGRPTDGRLSFM. Arg-518 is modified (asymmetric dimethylarginine).

Part of the SCF (SKP1-CUL1-F-box) E3 ubiquitin-protein ligase complex SCF(FBXO7) formed of CUL1, SKP1, RBX1 and FBXO7. Interacts via its C-terminal proline-rich region with DLGAP5. Interacts with BIRC2. Interacts with CDK6 and promotes its interaction with D-type cyclin. Interacts with PSMF1. In terms of assembly, interacts (via the N-terminal Ubl domain) with PRKN. Interact (via N-terminal region) with PINK1. As to quaternary structure, interact (via N-terminal region) with PINK1.

The protein localises to the cytoplasm. The protein resides in the nucleus. Its subcellular location is the mitochondrion. It localises to the cytosol. The protein operates within protein modification; protein ubiquitination. Substrate recognition component of a SCF (SKP1-CUL1-F-box protein) E3 ubiquitin-protein ligase complex which mediates the ubiquitination and subsequent proteasomal degradation of target proteins and plays a role in several biological processes such as cell cycle, cell proliferation, or maintenance of chromosome stability. Recognizes and ubiquitinates BIRC2 and the cell cycle regulator DLGAP5. Plays a role downstream of PINK1 in the clearance of damaged mitochondria via selective autophagy (mitophagy) by targeting PRKN to dysfunctional depolarized mitochondria. Promotes MFN1 ubiquitination. Mediates the ubiquitination and proteasomal degradation of UXT isoform 2, thereby impairing the NF-kappa-B signaling pathway. Inhibits NF-kappa-B pathway also by promoting the ubiquitination of TRAF2. Affects the assembly state and activity of the proteasome in the cells including neurons by ubiquitinating the proteasomal subunit PSMA2 via 'Lys-63'-linked polyubiquitin chains. Promotes 'Lys-48'-linked polyubiquitination SIRT7, leading to the hydrogen peroxide-induced cell death. This chain is F-box only protein 7 (FBXO7), found in Homo sapiens (Human).